Consider the following 394-residue polypeptide: Phosphoglycerate kinase (394 aa).

Residues 21-23 (DFN), Arg-36, 59-62 (HLGR), Arg-118, and Arg-151 each bind substrate. Ser-183 bears the Phosphoserine mark. Residues Lys-201 and Gly-292 each coordinate ATP. Residue Thr-299 is modified to Phosphothreonine. ATP-binding positions include Glu-323 and 350–353 (GGDS).

Belongs to the phosphoglycerate kinase family. In terms of assembly, monomer.

Its subcellular location is the cytoplasm. The enzyme catalyses (2R)-3-phosphoglycerate + ATP = (2R)-3-phospho-glyceroyl phosphate + ADP. Its pathway is carbohydrate degradation; glycolysis; pyruvate from D-glyceraldehyde 3-phosphate: step 2/5. The sequence is that of Phosphoglycerate kinase from Bacillus mycoides (strain KBAB4) (Bacillus weihenstephanensis).